The primary structure comprises 544 residues: Chaperonin GroEL (544 aa).

Residues 30 to 33, Lys-51, 87 to 91, Gly-415, 479 to 481, and Asp-495 each bind ATP; these read TLGP, DGTTT, and NAA.

It belongs to the chaperonin (HSP60) family. In terms of assembly, forms a cylinder of 14 subunits composed of two heptameric rings stacked back-to-back. Interacts with the co-chaperonin GroES.

It localises to the cytoplasm. The catalysed reaction is ATP + H2O + a folded polypeptide = ADP + phosphate + an unfolded polypeptide.. Its function is as follows. Together with its co-chaperonin GroES, plays an essential role in assisting protein folding. The GroEL-GroES system forms a nano-cage that allows encapsulation of the non-native substrate proteins and provides a physical environment optimized to promote and accelerate protein folding. This chain is Chaperonin GroEL, found in Acinetobacter baylyi (strain ATCC 33305 / BD413 / ADP1).